Here is a 230-residue protein sequence, read N- to C-terminus: Ion-translocating oxidoreductase complex subunit E (230 aa).

Helical transmembrane passes span 18 to 38 (ALVQ…ATNA), 39 to 59 (LGLG…VSAL), 63 to 83 (TPAE…VSAV), 86 to 106 (LINA…PLIV), 125 to 145 (WLSA…MFVL), and 182 to 202 (PFLL…MLAV).

Belongs to the NqrDE/RnfAE family. In terms of assembly, the complex is composed of six subunits: RsxA, RsxB, RsxC, RsxD, RsxE and RsxG.

Its subcellular location is the cell inner membrane. Functionally, part of a membrane-bound complex that couples electron transfer with translocation of ions across the membrane. Required to maintain the reduced state of SoxR. The protein is Ion-translocating oxidoreductase complex subunit E of Salmonella arizonae (strain ATCC BAA-731 / CDC346-86 / RSK2980).